Reading from the N-terminus, the 135-residue chain is U-scoloptoxin(22)-Er1a (135 aa).

Residues 1-24 form the signal peptide; that stretch reads MAVILKHLAIILLVFVIEIKMGQG. Residues 61-135 are disordered; the sequence is PQITFSTDWG…RSPRYLPTII (75 aa). Basic and acidic residues predominate over residues 75–127; sequence SVNEDREAAERERSPQMKRSEHEEQLMAKDEMKRFQEERNPSSDDKIAIDKRS.

This sequence belongs to the scoloptoxin-22 family. As to expression, expressed by the venom gland.

The protein localises to the secreted. The protein is U-scoloptoxin(22)-Er1a of Ethmostigmus rubripes (Giant centipede).